We begin with the raw amino-acid sequence, 339 residues long: Vomeronasal type-1 receptor A14 (339 aa).

The Extracellular portion of the chain corresponds to 1–42 (MMGVQICQGMMSEIPFFSPPPQFSYMMNKNIRLHTDSNIRNT). Residues 43–63 (FFTDIGIGISANSLLLLFNIF) traverse the membrane as a helical segment. Residues 64-75 (KLTRGQRSRLTD) are Cytoplasmic-facing. Residues 76–96 (LPIGLLSLINLLMLLMAAFIA) form a helical membrane-spanning segment. Residues 97 to 119 (TDTFISWKGWDDIICKFLVYLYR) lie on the Extracellular side of the membrane. Cys111 and Cys198 are disulfide-bonded. The chain crosses the membrane as a helical span at residues 120 to 140 (TFRGLSLCTSCLLSVLQAIIL). The Cytoplasmic segment spans residues 141–160 (SPRSSCLAKFKHKPPHHISC). Residues 161–181 (AILSLSVLYMFIGSHLLVSII) traverse the membrane as a helical segment. Residues 182 to 213 (ATPNLTTNDFIHVTQSCSILPMSYLMQCMFST) lie on the Extracellular side of the membrane. An N-linked (GlcNAc...) asparagine glycan is attached at Asn185. Residues 214-234 (LLAIRDVFLISLMVLSTWYMV) traverse the membrane as a helical segment. The Cytoplasmic segment spans residues 235 to 264 (ALLCRHRKQTRHLQGTSLSPKASPEQRATR). A helical membrane pass occupies residues 265 to 285 (SILMLMSLFVLMSVFDSIVCS). The Extracellular segment spans residues 286 to 296 (SRTMYLNDPIS). A helical membrane pass occupies residues 297–317 (YSIQLFMVHIYATVSPFVFIV). Over 318 to 339 (TEKHIVNFLRSVCEGDECLNIH) the chain is Cytoplasmic.

The protein belongs to the G-protein coupled receptor 1 family.

Its subcellular location is the cell membrane. Functionally, putative pheromone receptor implicated in the regulation of social as well as reproductive behavior. The chain is Vomeronasal type-1 receptor A14 from Rattus norvegicus (Rat).